The primary structure comprises 513 residues: Sodium/potassium/calcium exchanger 5 (513 aa).

The N-terminal stretch at methionine 1–cysteine 35 is a signal peptide. The Extracellular portion of the chain corresponds to alanine 36–aspartate 78. A helical transmembrane segment spans residues glycine 79–cysteine 99. At aspartate 100–alanine 123 the chain is on the cytoplasmic side. Residues threonine 124–valine 144 traverse the membrane as a helical segment. Residues threonine 145–aspartate 148 are Extracellular-facing. A helical membrane pass occupies residues isoleucine 149–cysteine 169. Residues glycine 170–cysteine 181 are Cytoplasmic-facing. A helical transmembrane segment spans residues tryptophan 182–isoleucine 202. Topologically, residues serine 203 to valine 207 are extracellular. Residues tyrosine 208–phenylalanine 228 form a helical membrane-spanning segment. Residues aspartate 229–aspartate 315 are Cytoplasmic-facing. Residues leucine 316 to proline 336 traverse the membrane as a helical segment. Over aspartate 337–threonine 350 the chain is Extracellular. Residues phenylalanine 351–isoleucine 371 traverse the membrane as a helical segment. The Cytoplasmic segment spans residues valine 372–threonine 381. The chain crosses the membrane as a helical span at residues valine 382–methionine 402. Topologically, residues valine 403–asparagine 420 are extracellular. Residues valine 421–glycine 441 traverse the membrane as a helical segment. Topologically, residues serine 442 to glycine 450 are cytoplasmic. A helical transmembrane segment spans residues leucine 451–isoleucine 471. The Extracellular portion of the chain corresponds to asparagine 472–leucine 482. Residues valine 483–isoleucine 503 form a helical membrane-spanning segment. At glycine 504–aspartate 513 the chain is on the cytoplasmic side.

It belongs to the Ca(2+):cation antiporter (CaCA) (TC 2.A.19) family. SLC24A subfamily. In terms of tissue distribution, highly expressed in melanin-producing cells. Colocalizes with melanin biosynthesis marker dct.

Its subcellular location is the golgi apparatus. The protein resides in the trans-Golgi network membrane. It localises to the melanosome. It catalyses the reaction Ca(2+)(out) + K(+)(out) + 4 Na(+)(in) = Ca(2+)(in) + K(+)(in) + 4 Na(+)(out). Calcium, potassium:sodium antiporter that transports 1 Ca(2+) and 1 K(+) to the melanosome in exchange for 4 cytoplasmic Na(+). Involved in pigmentation, possibly by participating in ion transport in melanosomes. Predominant sodium-calcium exchanger in melanocytes. This is Sodium/potassium/calcium exchanger 5 (slc24a5) from Danio rerio (Zebrafish).